The sequence spans 235 residues: Probable transcriptional regulatory protein Cla_1081 (235 aa).

The protein belongs to the TACO1 family.

It is found in the cytoplasm. This chain is Probable transcriptional regulatory protein Cla_1081, found in Campylobacter lari (strain RM2100 / D67 / ATCC BAA-1060).